Reading from the N-terminus, the 197-residue chain is dITP/XTP pyrophosphatase (197 aa).

Substrate is bound at residue 8–13 (TGNVGK). Mg(2+)-binding residues include glutamate 40 and aspartate 69. Residue aspartate 69 is the Proton acceptor of the active site. Substrate-binding positions include serine 70, 154 to 157 (FGYD), lysine 177, and 182 to 183 (HR).

The protein belongs to the HAM1 NTPase family. Homodimer. Mg(2+) is required as a cofactor. It depends on Mn(2+) as a cofactor. The cofactor is Ni(2+).

It catalyses the reaction XTP + H2O = XMP + diphosphate + H(+). The enzyme catalyses dITP + H2O = dIMP + diphosphate + H(+). It carries out the reaction ITP + H2O = IMP + diphosphate + H(+). Its function is as follows. Pyrophosphatase that catalyzes the hydrolysis of nucleoside triphosphates to their monophosphate derivatives, with a high preference for the non-canonical purine nucleotides XTP (xanthosine triphosphate), dITP (deoxyinosine triphosphate) and ITP. Can also efficiently hydrolyze 2'-deoxy-N-6-hydroxylaminopurine triphosphate (dHAPTP). Seems to function as a house-cleaning enzyme that removes non-canonical purine nucleotides from the nucleotide pool, thus preventing their incorporation into DNA/RNA and avoiding chromosomal lesions. To a much lesser extent, is also able to hydrolyze GTP, dGTP and dUTP, but shows very low activity toward the canonical nucleotides dATP, dCTP and dTTP and toward 8-oxo-dGTP, purine deoxyribose triphosphate, 2-aminopurine deoxyribose triphosphate and 2,6-diaminopurine deoxyribose triphosphate. In terms of biological role, genetic interactions among priB, dam, lexA, nagC, polA, rdgB, rdgB, rep and uup link the PriA-PriB replication restart pathway to DNA double-strand break repair. The sequence is that of dITP/XTP pyrophosphatase from Escherichia coli (strain K12).